A 71-amino-acid chain; its full sequence is Large ribosomal subunit protein eL38 (71 aa).

Belongs to the eukaryotic ribosomal protein eL38 family.

This Argas monolakensis (Mono lake bird tick) protein is Large ribosomal subunit protein eL38 (RpL38).